A 268-amino-acid chain; its full sequence is MNQEGASHSPSSTSTEPVRARWSPKPEQILILESIFNSGTVNPPKDETVRIRKMLEKFGAVGDANVFYWFQNRRSRSRRRHRQLLAATTAAATSIGAEDHQHMTAMSMHQYPCSNNEIDLGFGSCSNLSANYFLNGSSSSQIPSFFLGLSSSSGGCENNNGMENLFKMYGHESDHNHQQQHHSSNAASVLNPSDQNSNSQYEQEGFMTVFINGVPMEVTKGAIDMKTMFGDDSVLLHSSGLPLPTDEFGFLMHSLQHGQTYFLVPRQT.

Positions 1 to 16 (MNQEGASHSPSSTSTE) are enriched in polar residues. 2 disordered regions span residues 1–22 (MNQE…RARW) and 173–198 (SDHN…QNSN). A DNA-binding region (homeobox; WUS-type) is located at residues 17–81 (PVRARWSPKP…NRRSRSRRRH (65 aa)).

The protein belongs to the WUS homeobox family.

The protein resides in the nucleus. Functionally, transcription factor which may be involved in developmental processes. This chain is WUSCHEL-related homeobox 12 (WOX12), found in Arabidopsis thaliana (Mouse-ear cress).